The chain runs to 221 residues: Carbonic anhydrase (221 aa).

Zn(2+) contacts are provided by Cys-38, Asp-40, His-99, and Cys-102.

The protein belongs to the beta-class carbonic anhydrase family. Requires Zn(2+) as cofactor.

The catalysed reaction is hydrogencarbonate + H(+) = CO2 + H2O. The chain is Carbonic anhydrase (cynT) from Helicobacter pylori (strain ATCC 700392 / 26695) (Campylobacter pylori).